Here is a 165-residue protein sequence, read N- to C-terminus: MPGENSFDIVSDFDQQELVNAVDQTLREVQTRYDLKDAGVTLTLSKTELIIEADSEMALRSVRDVLETKALRRKLSLKIFDYGKPTDASGGRVRQVVTLRRGIDSELAKKIAKMIRDRFPKVQPRIQGDALRVTGKSRDELQAVIAFLRERESEIPVPLQMTNYR.

The protein belongs to the YajQ family.

In terms of biological role, nucleotide-binding protein. This chain is Nucleotide-binding protein Cagg_1607, found in Chloroflexus aggregans (strain MD-66 / DSM 9485).